Here is a 399-residue protein sequence, read N- to C-terminus: Glutathione-independent formaldehyde dehydrogenase (399 aa).

Cysteine 47 is a binding site for Zn(2+). The NAD(+) site is built by glycine 48, serine 49, and histidine 52. Residues histidine 68, cysteine 98, cysteine 101, cysteine 104, cysteine 112, and aspartate 170 each coordinate Zn(2+). Residues valine 198, aspartate 218, arginine 223, valine 263, arginine 268, histidine 270, proline 300, leucine 302, glycine 337, and threonine 339 each contribute to the NAD(+) site.

This sequence belongs to the zinc-containing alcohol dehydrogenase family. As to quaternary structure, homotetramer. Zn(2+) serves as cofactor.

The catalysed reaction is formaldehyde + NAD(+) + H2O = formate + NADH + 2 H(+). The enzyme catalyses acetaldehyde + NAD(+) + H2O = acetate + NADH + 2 H(+). It carries out the reaction 2 formaldehyde + H2O = methanol + formate + H(+). With respect to regulation, inactivated by bipyridine and p-chloromercuribenzoate. Dehydrogenase that catalyzes the NAD(+)-dependent oxidation of formaldehyde and acetaldehyde, and, to a lesser extent, long-chain alcohols, but is inactive against propionaldehyde, butyraldehyde, methanol and ethanol. Can also catalyze the dismutation of a wide range of aldehydes such as formaldehyde. The sequence is that of Glutathione-independent formaldehyde dehydrogenase from Pseudomonas putida (Arthrobacter siderocapsulatus).